Here is a 104-residue protein sequence, read N- to C-terminus: Large ribosomal subunit protein uL24 (104 aa).

This sequence belongs to the universal ribosomal protein uL24 family. In terms of assembly, part of the 50S ribosomal subunit.

Its function is as follows. One of two assembly initiator proteins, it binds directly to the 5'-end of the 23S rRNA, where it nucleates assembly of the 50S subunit. Functionally, one of the proteins that surrounds the polypeptide exit tunnel on the outside of the subunit. The protein is Large ribosomal subunit protein uL24 of Bradyrhizobium sp. (strain ORS 278).